Reading from the N-terminus, the 255-residue chain is Type III pantothenate kinase (255 aa).

6–13 (DVGNTNIV) is an ATP binding site. Substrate contacts are provided by residues Tyr100 and 107 to 110 (GADR). Asp109 serves as the catalytic Proton acceptor. K(+) is bound at residue Asp129. ATP is bound at residue Thr132. Position 184 (Thr184) interacts with substrate.

It belongs to the type III pantothenate kinase family. As to quaternary structure, homodimer. Requires NH4(+) as cofactor. The cofactor is K(+).

It localises to the cytoplasm. The catalysed reaction is (R)-pantothenate + ATP = (R)-4'-phosphopantothenate + ADP + H(+). It participates in cofactor biosynthesis; coenzyme A biosynthesis; CoA from (R)-pantothenate: step 1/5. Catalyzes the phosphorylation of pantothenate (Pan), the first step in CoA biosynthesis. The sequence is that of Type III pantothenate kinase from Thermoanaerobacter sp. (strain X514).